The primary structure comprises 125 residues: Small ribosomal subunit protein uS13 (125 aa).

The protein belongs to the universal ribosomal protein uS13 family. Part of the 30S ribosomal subunit. Forms a loose heterodimer with protein S19. Forms two bridges to the 50S subunit in the 70S ribosome.

In terms of biological role, located at the top of the head of the 30S subunit, it contacts several helices of the 16S rRNA. In the 70S ribosome it contacts the 23S rRNA (bridge B1a) and protein L5 of the 50S subunit (bridge B1b), connecting the 2 subunits; these bridges are implicated in subunit movement. Contacts the tRNAs in the A and P-sites. In Rickettsia akari (strain Hartford), this protein is Small ribosomal subunit protein uS13.